The primary structure comprises 323 residues: MLDIAMPKIEVVTAAENYGRFKIEPLDPGYGHTLGNALRRVLLSSIPGAAITKIKIDGVFHEFSTISGIKEDVTEIVLNIKGVRLRSYAERPVKISLSKRGSGIVRAADIDAPSNVEIVNPFHYICTIDRDDAMLEMEMTVERGRGYLPADQRDALPIGEIPIDAIFTPVPKVNYVVENIRVGQATDFDSLLIEIWTDGTIKPGDALSHAAQVLVQYSQTIADFNRLSTETESTAAPNGLAIPADIYDTPIEELDLSTRTYNCLKRADITKVGQVLEMDEKALLSVRNLGQKSMEEIRDKLIERGYIPRIGQTTNSSPAGIES.

An alpha N-terminal domain (alpha-NTD) region spans residues Met-1–Asn-225. The segment at Pro-243–Ser-323 is alpha C-terminal domain (alpha-CTD).

Belongs to the RNA polymerase alpha chain family. Homodimer. The RNAP catalytic core consists of 2 alpha, 1 beta, 1 beta' and 1 omega subunit. When a sigma factor is associated with the core the holoenzyme is formed, which can initiate transcription.

The catalysed reaction is RNA(n) + a ribonucleoside 5'-triphosphate = RNA(n+1) + diphosphate. Its function is as follows. DNA-dependent RNA polymerase catalyzes the transcription of DNA into RNA using the four ribonucleoside triphosphates as substrates. This is DNA-directed RNA polymerase subunit alpha from Roseiflexus castenholzii (strain DSM 13941 / HLO8).